The primary structure comprises 31 residues: Jingzhaotoxin F7-15.33 (31 aa).

3 disulfides stabilise this stretch: C2–C16, C9–C21, and C15–C28.

This sequence belongs to the neurotoxin 10 (Hwtx-1) family. In terms of tissue distribution, expressed by the venom gland.

Its subcellular location is the secreted. Its function is as follows. Probable ion channel inhibitor. The protein is Jingzhaotoxin F7-15.33 of Chilobrachys guangxiensis (Chinese earth tiger tarantula).